Here is a 152-residue protein sequence, read N- to C-terminus: Transcriptional repressor NrdR (152 aa).

Residues 3 to 34 (CPKCGSLNDKVVDTRQSKDGTVIRRRRECLDC) fold into a zinc finger. In terms of domain architecture, ATP-cone spans 49–139 (IVVKKKNGTT…VYNEFQDIKD (91 aa)).

Belongs to the NrdR family. Zn(2+) is required as a cofactor.

In terms of biological role, negatively regulates transcription of bacterial ribonucleotide reductase nrd genes and operons by binding to NrdR-boxes. This Persephonella marina (strain DSM 14350 / EX-H1) protein is Transcriptional repressor NrdR.